The primary structure comprises 181 residues: 6,7-dimethyl-8-ribityllumazine synthase (181 aa).

5-amino-6-(D-ribitylamino)uracil is bound by residues Tyr27, 58–60, and 87–89; these read ALE and CVI. 92–93 contacts (2S)-2-hydroxy-3-oxobutyl phosphate; sequence ET. His95 functions as the Proton donor in the catalytic mechanism. Asn120 is a 5-amino-6-(D-ribitylamino)uracil binding site. Arg134 is a binding site for (2S)-2-hydroxy-3-oxobutyl phosphate.

The protein belongs to the DMRL synthase family.

It carries out the reaction (2S)-2-hydroxy-3-oxobutyl phosphate + 5-amino-6-(D-ribitylamino)uracil = 6,7-dimethyl-8-(1-D-ribityl)lumazine + phosphate + 2 H2O + H(+). It functions in the pathway cofactor biosynthesis; riboflavin biosynthesis; riboflavin from 2-hydroxy-3-oxobutyl phosphate and 5-amino-6-(D-ribitylamino)uracil: step 1/2. In terms of biological role, catalyzes the formation of 6,7-dimethyl-8-ribityllumazine by condensation of 5-amino-6-(D-ribitylamino)uracil with 3,4-dihydroxy-2-butanone 4-phosphate. This is the penultimate step in the biosynthesis of riboflavin. This is 6,7-dimethyl-8-ribityllumazine synthase from Methylobacterium nodulans (strain LMG 21967 / CNCM I-2342 / ORS 2060).